We begin with the raw amino-acid sequence, 250 residues long: Glycerol-1-phosphate phosphohydrolase 1 (250 aa).

The active-site Nucleophile is the Asp18. Mg(2+)-binding residues include Asp18 and Asp20. Asp20 (proton donor) is an active-site residue. Lys64 participates in a covalent cross-link: Glycyl lysine isopeptide (Lys-Gly) (interchain with G-Cter in SUMO); alternate. A Glycyl lysine isopeptide (Lys-Gly) (interchain with G-Cter in ubiquitin); alternate cross-link involves residue Lys64. Ser90 bears the Phosphoserine mark. A Glycyl lysine isopeptide (Lys-Gly) (interchain with G-Cter in ubiquitin) cross-link involves residue Lys144. Residue Asp179 coordinates Mg(2+).

This sequence belongs to the HAD-like hydrolase superfamily. DOG/GPP family. Monomer. The cofactor is Mg(2+).

It is found in the cytoplasm. Its subcellular location is the nucleus. The catalysed reaction is sn-glycerol 1-phosphate + H2O = glycerol + phosphate. It catalyses the reaction sn-glycerol 3-phosphate + H2O = glycerol + phosphate. Functionally, major isoform of glycerol-1-phosphate phosphohydrolase involved in glycerol biosynthesis. Plays a role in osmoadaptation and required for adaptation to anaerobic conditions. The protein is Glycerol-1-phosphate phosphohydrolase 1 of Saccharomyces cerevisiae (strain ATCC 204508 / S288c) (Baker's yeast).